The chain runs to 436 residues: EPS I polysaccharide export inner membrane protein EpsE (436 aa).

Transmembrane regions (helical) follow at residues 20–40 (VLGLGAAVASRGAVFLVNIML), 49–69 (FGLFSYAYVTALNLGLFLATG), 91–111 (LCAFIVLLVALIAVAATALYL), 132–152 (MAAIVLIATAFTQALQAFLYA), 160–180 (ASVSIGAALLLLAMLWTMGPI), 184–204 (VVALVIFLAINAGAAASQLVI), 234–254 (VLTTSMGAPVHWICLSMLAAM), 261–281 (LALFSVAFQWYIAITFIPATL), 307–327 (ALLFGGGLSLALGCMAFLLAG), 341–361 (AAASMRSLAVAAALCGISVLL), 375–395 (FAMAAVYSVIYVAAAYLALRL), and 396–416 (GYGAPSIGLAMSAAYCCLILF).

The protein to E.coli bicyclomycin resistance protein (BCR).

The protein localises to the cell inner membrane. Probably involved in polymerization and/or export of exopolysaccharide EPS I which functions as a virulence factor. May play a role in export of EPS I or its intermediates across the membranes. The protein is EPS I polysaccharide export inner membrane protein EpsE (epsE) of Ralstonia nicotianae (strain ATCC BAA-1114 / GMI1000) (Ralstonia solanacearum).